Consider the following 273-residue polypeptide: SKA complex subunit 1 homolog (273 aa).

The stretch at 77 to 97 forms a coiled coil; that stretch reads KKLVQRSLKEEEKLQHMLANL.

Belongs to the SKA1 family.

This is SKA complex subunit 1 homolog from Zea mays (Maize).